The following is a 721-amino-acid chain: MELGKGKLLRTGLNALHQAVHPIHGLAWTDGNQVVLTDLRLHSGEVKFGDSKVIGQFECVCGLSWAPPVADDTPVLLAVQHEKHVTVWQLCPSPMESSKWLTSQTCEIRGSLPILPQGCVWHPKCAILTVLTAQDVSIFPNVHSDDSQVKADINTQGRIHCACWTQDGLRLVVAVGSSLHSYIWDSAQKTLHRCSSCLVFDVDSHVCSITATVDSQVAIATELPLDKICGLNASETFNIPPNSKDMTPYALPVIGEVRSMDKEATDSETNSEVSVSSSYLEPLDLTHIHFNQHKSEGNSLICLRKKDYLTGTGQDSSHLVLVTFKKAVTMTRKVTIPGILVPDLIAFNLKAHVVAVASNTCNIILIYSVIPSSVPNIQQIRLENTERPKGICFLTDQLLLILVGKQKLTDTTFLPSSKSDQYAISLIVREIMLEEEPSITSGESQTTYSTFSAPLNKANRKKLIESLSPDFCHQNKGLLLTVNTSSQNGRPGRTLIKEIQSPLSSICDGSIALDAEPVTQPASLPRHSSTPDHTSTLEPPRLPQRKNLQSEKETYQLSKEVEILSRNLVEMQRCLSELTNRLHNGKKSSSVYPLSQDLPYVHIIYQKPYYLGPVVEKRAVLLCDGKLRLSTVQQTFGLSLIEMLHDSHWILLSADSEGFIPLTFTATQEIIIRDGSLSRSDVFRDSFSHSPGAVSSLKVFTGLAAPSLDTTGCCNHVDGMA.

Residue Met1 is modified to N-acetylmethionine. WD repeat units follow at residues 55 to 98 and 154 to 194; these read GQFE…MESS and NTQG…LHRC. Phosphoserine occurs at positions 299, 468, 501, and 523. Residues 520-537 show a composition bias toward polar residues; it reads QPASLPRHSSTPDHTSTL. Residues 520 to 553 form a disordered region; the sequence is QPASLPRHSSTPDHTSTLEPPRLPQRKNLQSEKE. Thr530 carries the phosphothreonine modification. Residues 539–545 are interaction with HCK; the sequence is PPRLPQR. Residues 556–584 are a coiled coil; it reads QLSKEVEILSRNLVEMQRCLSELTNRLHN. Phosphoserine is present on residues Ser686 and Ser690.

In terms of assembly, oligomer. Interacts with HCK (via SH3 domain). Phosphorylated on Tyr when associated with HCK.

This chain is WD repeat and coiled-coil-containing protein, found in Homo sapiens (Human).